We begin with the raw amino-acid sequence, 380 residues long: uncharacterized protein (380 aa).

9 consecutive transmembrane segments (helical) span residues 15-35 (LFHP…LAFP), 45-65 (LFKI…PFIF), 75-95 (ILYL…FKIT), 98-118 (LFLS…FVKF), 123-143 (IFVD…VLIY), 182-202 (IIAF…MLFI), 217-237 (MVLL…IILL), 303-323 (GTIY…LGVI), and 341-361 (LLLA…LSLL).

It is found in the cell membrane. This is an uncharacterized protein from Methanocaldococcus jannaschii (strain ATCC 43067 / DSM 2661 / JAL-1 / JCM 10045 / NBRC 100440) (Methanococcus jannaschii).